Consider the following 376-residue polypeptide: Small ribosomal subunit protein uS11m (376 aa).

It belongs to the universal ribosomal protein uS11 family. Component of the mitochondrial small ribosomal subunit (mt-SSU). Mature N.crassa 74S mitochondrial ribosomes consist of a small (37S) and a large (54S) subunit. The 37S small subunit contains a 16S ribosomal RNA (16S mt-rRNA) and 32 different proteins. The 54S large subunit contains a 23S rRNA (23S mt-rRNA) and 42 different proteins.

It is found in the mitochondrion. Component of the mitochondrial ribosome (mitoribosome), a dedicated translation machinery responsible for the synthesis of mitochondrial genome-encoded proteins, including at least some of the essential transmembrane subunits of the mitochondrial respiratory chain. The mitoribosomes are attached to the mitochondrial inner membrane and translation products are cotranslationally integrated into the membrane. The sequence is that of Small ribosomal subunit protein uS11m (mrps18) from Neurospora crassa (strain ATCC 24698 / 74-OR23-1A / CBS 708.71 / DSM 1257 / FGSC 987).